Reading from the N-terminus, the 204-residue chain is uncharacterized protein (204 aa).

The first 17 residues, 1–17, serve as a signal peptide directing secretion; sequence MKRLVTGLLALSLFLAA. The segment at 17–102 is disordered; sequence ACGQDSDQQK…NQSSNNQKSS (86 aa). The N-palmitoyl cysteine moiety is linked to residue Cys18. The S-diacylglycerol cysteine moiety is linked to residue Cys18. Residues 23–70 are compositionally biased toward basic and acidic residues; sequence DQQKDSNKEKDDKAKTEQQDKKTNDSSKDKKDNKDDSKDVNKDNKDNS. Positions 71–102 are enriched in low complexity; that stretch reads ANDNQQQSNSNATNNDQNQTNNNQSSNNQKSS.

It localises to the cell membrane. This is an uncharacterized protein from Staphylococcus aureus (strain Mu50 / ATCC 700699).